Here is a 544-residue protein sequence, read N- to C-terminus: uncharacterized protein (544 aa).

The first 22 residues, 1–22 (MYFSQNAIILVMLMFVISAVFY), serve as a signal peptide directing secretion.

This is an uncharacterized protein from Methanocaldococcus jannaschii (strain ATCC 43067 / DSM 2661 / JAL-1 / JCM 10045 / NBRC 100440) (Methanococcus jannaschii).